A 373-amino-acid chain; its full sequence is DNA replication and repair protein RecF (373 aa).

30-37 serves as a coordination point for ATP; it reads GANGSGKT.

This sequence belongs to the RecF family.

It localises to the cytoplasm. The RecF protein is involved in DNA metabolism; it is required for DNA replication and normal SOS inducibility. RecF binds preferentially to single-stranded, linear DNA. It also seems to bind ATP. This Marinobacter nauticus (strain ATCC 700491 / DSM 11845 / VT8) (Marinobacter aquaeolei) protein is DNA replication and repair protein RecF.